The primary structure comprises 345 residues: Dihydroorotase (345 aa).

Positions 14 and 16 each coordinate Zn(2+). Substrate is bound by residues 16–18 and Asn-42; that span reads HLR. Positions 100, 137, and 175 each coordinate Zn(2+). N6-carboxylysine is present on Lys-100. Substrate is bound at residue His-137. Substrate is bound at residue Leu-220. Asp-248 is a Zn(2+) binding site. Asp-248 is an active-site residue. 2 residues coordinate substrate: His-252 and Ala-264.

Belongs to the metallo-dependent hydrolases superfamily. DHOase family. Class II DHOase subfamily. As to quaternary structure, homodimer. Requires Zn(2+) as cofactor.

The enzyme catalyses (S)-dihydroorotate + H2O = N-carbamoyl-L-aspartate + H(+). Its pathway is pyrimidine metabolism; UMP biosynthesis via de novo pathway; (S)-dihydroorotate from bicarbonate: step 3/3. In terms of biological role, catalyzes the reversible cyclization of carbamoyl aspartate to dihydroorotate. This Methylobacillus flagellatus (strain ATCC 51484 / DSM 6875 / VKM B-1610 / KT) protein is Dihydroorotase.